Here is a 1159-residue protein sequence, read N- to C-terminus: DNA-directed RNA polymerase subunit beta (1159 aa).

The protein belongs to the RNA polymerase beta chain family. In terms of assembly, the RNAP catalytic core consists of 2 alpha, 1 beta, 1 beta' and 1 omega subunit. When a sigma factor is associated with the core the holoenzyme is formed, which can initiate transcription.

It carries out the reaction RNA(n) + a ribonucleoside 5'-triphosphate = RNA(n+1) + diphosphate. Functionally, DNA-dependent RNA polymerase catalyzes the transcription of DNA into RNA using the four ribonucleoside triphosphates as substrates. This chain is DNA-directed RNA polymerase subunit beta, found in Deinococcus radiodurans (strain ATCC 13939 / DSM 20539 / JCM 16871 / CCUG 27074 / LMG 4051 / NBRC 15346 / NCIMB 9279 / VKM B-1422 / R1).